We begin with the raw amino-acid sequence, 104 residues long: MSQSFEGELKTLLRSGKVILGTRKTLKLLKTGKVKGVVVSSTLRQDLKDDIMTFSKFSDIPIYLYKGSGYELGTLCGKPFMVSVIGIVDEGESKILEFIKEVKQ.

This sequence belongs to the eukaryotic ribosomal protein eL30 family.

This Sulfolobus acidocaldarius (strain ATCC 33909 / DSM 639 / JCM 8929 / NBRC 15157 / NCIMB 11770) protein is Large ribosomal subunit protein eL30 (rpl30e).